A 457-amino-acid chain; its full sequence is NAC domain-containing protein 69 (457 aa).

Residues 4-153 (DLVGYRFYPT…NYVICQVMYK (150 aa)) enclose the NAC domain. Residues 107 to 159 (IGIKKTLVYYEGRVPKGVWTPWVMHEYHITCLPQDQRNYVICQVMYKGEDGDV) mediate DNA binding. 2 disordered regions span residues 158-180 (DVPS…SNTV) and 302-332 (DSNS…SNRQ). The segment covering 162-180 (GGNNSSEPSQSLVSDSNTV) has biased composition (polar residues). The span at 302–311 (DSNSDAESIS) shows a compositional bias: low complexity. Over residues 312-332 (ATSYQGTSSPGDDSVGSSNRQ) the composition is skewed to polar residues. Residues 421–441 (IYLMRMIIGFILLLALISNII) form a helical membrane-spanning segment.

It is found in the membrane. Its subcellular location is the nucleus. Functionally, transcription activator activated by proteolytic cleavage through regulated intramembrane proteolysis (RIP). Involved in salt stress response during seed germination and seedling growth. Binds the auxin-responsive IAA30 gene promoter and may serve as a molecular link that interconnects a developmental feedback loop of auxin signaling with a salt signal transduction pathway during seed germination. This chain is NAC domain-containing protein 69 (NAC69), found in Arabidopsis thaliana (Mouse-ear cress).